The sequence spans 229 residues: Aquaporin Z (229 aa).

2 consecutive transmembrane segments (helical) span residues 8 to 28 and 33 to 53; these read FLGT…AAGF and IGFA…AYAI. The short motif at 62-64 is the NPA 1 element; that stretch reads NPA. 3 helical membrane passes run 88 to 108, 129 to 149, and 158 to 178; these read VLGA…GAGF, LLAA…VIMG, and GFAP…SIPV. Positions 184–186 match the NPA 2 motif; it reads NPA. The helical transmembrane segment at 192-212 threads the bilayer; sequence ALFVGGWAVQQLWLFWLAPII.

The protein belongs to the MIP/aquaporin (TC 1.A.8) family. Homotetramer.

The protein resides in the cell inner membrane. The enzyme catalyses H2O(in) = H2O(out). Its function is as follows. Channel that permits osmotically driven movement of water in both directions. It is involved in the osmoregulation and in the maintenance of cell turgor during volume expansion in rapidly growing cells. It mediates rapid entry or exit of water in response to abrupt changes in osmolarity. This chain is Aquaporin Z, found in Chromobacterium violaceum (strain ATCC 12472 / DSM 30191 / JCM 1249 / CCUG 213 / NBRC 12614 / NCIMB 9131 / NCTC 9757 / MK).